We begin with the raw amino-acid sequence, 227 residues long: Lipoprotein-releasing system ATP-binding protein LolD (227 aa).

An ABC transporter domain is found at 6–227 (LKIEGLRKTY…HLEDGVLVER (222 aa)). 43 to 50 (APSGAGKS) contributes to the ATP binding site.

This sequence belongs to the ABC transporter superfamily. Lipoprotein translocase (TC 3.A.1.125) family. The complex is composed of two ATP-binding proteins (LolD) and two transmembrane proteins (LolC and LolE).

It is found in the cell inner membrane. Part of the ABC transporter complex LolCDE involved in the translocation of mature outer membrane-directed lipoproteins, from the inner membrane to the periplasmic chaperone, LolA. Responsible for the formation of the LolA-lipoprotein complex in an ATP-dependent manner. This chain is Lipoprotein-releasing system ATP-binding protein LolD, found in Ruegeria sp. (strain TM1040) (Silicibacter sp.).